Consider the following 445-residue polypeptide: Phosphoglucosamine mutase (445 aa).

S99 functions as the Phosphoserine intermediate in the catalytic mechanism. Residues S99, D242, D244, and D246 each contribute to the Mg(2+) site. The residue at position 99 (S99) is a Phosphoserine.

The protein belongs to the phosphohexose mutase family. Mg(2+) serves as cofactor. Post-translationally, activated by phosphorylation.

It carries out the reaction alpha-D-glucosamine 1-phosphate = D-glucosamine 6-phosphate. Catalyzes the conversion of glucosamine-6-phosphate to glucosamine-1-phosphate. The chain is Phosphoglucosamine mutase from Sulfurovum sp. (strain NBC37-1).